Reading from the N-terminus, the 205-residue chain is Putative protein phosphatase inhibitor 2-like protein 1 (205 aa).

Disordered stretches follow at residues 1-44 (MAAS…SKKS), 64-92 (GLMK…TETT), 107-148 (AEGL…TLHY), and 171-205 (VEEM…SRSS). Required for binding PPP1CC stretches follow at residues 12-17 (KGILKD) and 43-55 (KSQK…ILAT). Over residues 17–26 (DNTSTTSSMV) the composition is skewed to polar residues. The span at 30-44 (EHPRGSVHEQLSKKS) shows a compositional bias: basic and acidic residues. A Phosphothreonine; by GSK3 modification is found at Thr73. Composition is skewed to acidic residues over residues 80 to 91 (GDDEDACSDTET) and 121 to 130 (SSGEEDSDLS). Ser87 carries the phosphoserine; by CK2 modification. The segment covering 131–144 (PEEREKKRQFEMRR) has biased composition (basic and acidic residues). Residues 147 to 150 (HYNE) are required for binding PPP1CC catalytic center, displacing metal ions and inhibition of PPP1CC catalytic activity. Residues 182 to 205 (SMNTEESNQGSTASDQQQNKSRSS) show a composition bias toward polar residues.

The protein belongs to the protein phosphatase inhibitor 2 family.

In terms of biological role, inhibitor of protein-phosphatase 1. The sequence is that of Putative protein phosphatase inhibitor 2-like protein 1 (PPP1R2P1) from Homo sapiens (Human).